The primary structure comprises 173 residues: Enhancer of split mdelta protein (173 aa).

The 58-residue stretch at 15-72 folds into the bHLH domain; it reads YRKVTKPLLERKRRARMNLYLDELKDLIVDTMDAQGEQVSKLEKADILELTVNYLKAQ. An Orange domain is found at 93 to 126; it reads FRAGYTQAAYEVSHIFSTVPGLDLKFGTHLMKQL. A disordered region spans residues 147–173; that stretch reads VNLADQKRSKSPREEDIHHGEEVWRPW. Residues 151 to 173 show a composition bias toward basic and acidic residues; the sequence is DQKRSKSPREEDIHHGEEVWRPW. The WRPW motif motif lies at 170 to 173; that stretch reads WRPW.

In terms of assembly, transcription repression requires formation of a complex with a corepressor protein (Groucho).

It is found in the nucleus. Transcriptional repressor of genes that require a bHLH protein for their transcription. May serve as a transcriptional regulator of the Achaete-scute complex (AS-C) genes. Contributes to the neural-epidermal lineage decision during early neurogenesis. As part of the Notch signaling pathway, required to maintain the self-renewal and identity of type II neuroblasts by regulating the expression of the transcriptional repressor erm. The protein is Enhancer of split mdelta protein of Drosophila melanogaster (Fruit fly).